Here is a 456-residue protein sequence, read N- to C-terminus: Bifunctional protein GlmU (456 aa).

The pyrophosphorylase stretch occupies residues 1-229 (MSNSAMSVVI…LSEVEGVNNR (229 aa)). UDP-N-acetyl-alpha-D-glucosamine is bound by residues 11–14 (LAAG), lysine 25, glutamine 76, 81–82 (GT), 103–105 (YGD), glycine 140, glutamate 154, asparagine 169, and asparagine 227. Aspartate 105 is a binding site for Mg(2+). Asparagine 227 contributes to the Mg(2+) binding site. Positions 230–250 (LQLARLERVYQAEQAEKLLLA) are linker. The interval 251–456 (GVMLRDPARF…QGWQRPVKKK (206 aa)) is N-acetyltransferase. Residues arginine 333 and lysine 351 each contribute to the UDP-N-acetyl-alpha-D-glucosamine site. The active-site Proton acceptor is histidine 363. UDP-N-acetyl-alpha-D-glucosamine-binding residues include tyrosine 366 and asparagine 377. Residues alanine 380, 386–387 (NY), serine 405, alanine 423, and arginine 440 each bind acetyl-CoA.

The protein in the N-terminal section; belongs to the N-acetylglucosamine-1-phosphate uridyltransferase family. This sequence in the C-terminal section; belongs to the transferase hexapeptide repeat family. In terms of assembly, homotrimer. The cofactor is Mg(2+).

The protein resides in the cytoplasm. The enzyme catalyses alpha-D-glucosamine 1-phosphate + acetyl-CoA = N-acetyl-alpha-D-glucosamine 1-phosphate + CoA + H(+). The catalysed reaction is N-acetyl-alpha-D-glucosamine 1-phosphate + UTP + H(+) = UDP-N-acetyl-alpha-D-glucosamine + diphosphate. Its pathway is nucleotide-sugar biosynthesis; UDP-N-acetyl-alpha-D-glucosamine biosynthesis; N-acetyl-alpha-D-glucosamine 1-phosphate from alpha-D-glucosamine 6-phosphate (route II): step 2/2. It functions in the pathway nucleotide-sugar biosynthesis; UDP-N-acetyl-alpha-D-glucosamine biosynthesis; UDP-N-acetyl-alpha-D-glucosamine from N-acetyl-alpha-D-glucosamine 1-phosphate: step 1/1. The protein operates within bacterial outer membrane biogenesis; LPS lipid A biosynthesis. Catalyzes the last two sequential reactions in the de novo biosynthetic pathway for UDP-N-acetylglucosamine (UDP-GlcNAc). The C-terminal domain catalyzes the transfer of acetyl group from acetyl coenzyme A to glucosamine-1-phosphate (GlcN-1-P) to produce N-acetylglucosamine-1-phosphate (GlcNAc-1-P), which is converted into UDP-GlcNAc by the transfer of uridine 5-monophosphate (from uridine 5-triphosphate), a reaction catalyzed by the N-terminal domain. The sequence is that of Bifunctional protein GlmU from Klebsiella pneumoniae subsp. pneumoniae (strain ATCC 700721 / MGH 78578).